Here is a 312-residue protein sequence, read N- to C-terminus: tRNA uridine(34) hydroxylase (312 aa).

The 95-residue stretch at 123-217 (SDPEVLLIDT…YLEEVPQEQS (95 aa)) folds into the Rhodanese domain. Cys-177 acts as the Cysteine persulfide intermediate in catalysis. Positions 282–293 (ARERQKQIELAR) are enriched in basic and acidic residues. The disordered stretch occupies residues 282–312 (ARERQKQIELARQRNQPHPLGRDPRQSTLEN).

It belongs to the TrhO family.

It catalyses the reaction uridine(34) in tRNA + AH2 + O2 = 5-hydroxyuridine(34) in tRNA + A + H2O. Catalyzes oxygen-dependent 5-hydroxyuridine (ho5U) modification at position 34 in tRNAs. The sequence is that of tRNA uridine(34) hydroxylase from Pseudomonas paraeruginosa (strain DSM 24068 / PA7) (Pseudomonas aeruginosa (strain PA7)).